The primary structure comprises 370 residues: Glutamate 5-kinase (370 aa).

Lys-12 contacts ATP. Substrate contacts are provided by Ser-52, Asp-139, and Asn-151. ATP contacts are provided by residues 171–172 and 213–219; these read SD and TGGMFTK. The PUA domain maps to 278–356; that stretch reads QAHIAVDAGA…SDIESILGYS (79 aa).

This sequence belongs to the glutamate 5-kinase family.

The protein resides in the cytoplasm. The catalysed reaction is L-glutamate + ATP = L-glutamyl 5-phosphate + ADP. Its pathway is amino-acid biosynthesis; L-proline biosynthesis; L-glutamate 5-semialdehyde from L-glutamate: step 1/2. In terms of biological role, catalyzes the transfer of a phosphate group to glutamate to form L-glutamate 5-phosphate. The chain is Glutamate 5-kinase from Herpetosiphon aurantiacus (strain ATCC 23779 / DSM 785 / 114-95).